The following is a 363-amino-acid chain: Cytoplasmic tRNA 2-thiolation protein 1 (363 aa).

Residues 340 to 363 (ASLNGTPRTPPTPAEPVEGIERAA) form a disordered region.

Belongs to the TtcA family. CTU1/NCS6/ATPBD3 subfamily.

Its subcellular location is the cytoplasm. Its pathway is tRNA modification; 5-methoxycarbonylmethyl-2-thiouridine-tRNA biosynthesis. Plays a central role in 2-thiolation of mcm(5)S(2)U at tRNA wobble positions of tRNA(Lys), tRNA(Glu) and tRNA(Gln). Directly binds tRNAs and probably acts by catalyzing adenylation of tRNAs, an intermediate required for 2-thiolation. It is unclear whether it acts as a sulfurtransferase that transfers sulfur from thiocarboxylated URM1 onto the uridine of tRNAs at wobble position. Prior mcm(5) tRNA modification by the elongator complex is required for 2-thiolation. May also be involved in protein urmylation. The chain is Cytoplasmic tRNA 2-thiolation protein 1 from Cryptococcus neoformans var. neoformans serotype D (strain B-3501A) (Filobasidiella neoformans).